Here is a 327-residue protein sequence, read N- to C-terminus: Phenylalanine--tRNA ligase alpha subunit (327 aa).

Glutamate 252 is a Mg(2+) binding site.

It belongs to the class-II aminoacyl-tRNA synthetase family. Phe-tRNA synthetase alpha subunit type 1 subfamily. In terms of assembly, tetramer of two alpha and two beta subunits. Mg(2+) is required as a cofactor.

The protein resides in the cytoplasm. It carries out the reaction tRNA(Phe) + L-phenylalanine + ATP = L-phenylalanyl-tRNA(Phe) + AMP + diphosphate + H(+). The protein is Phenylalanine--tRNA ligase alpha subunit of Proteus mirabilis (strain HI4320).